The chain runs to 353 residues: S-adenosylmethionine:tRNA ribosyltransferase-isomerase (353 aa).

It belongs to the QueA family. In terms of assembly, monomer.

The protein resides in the cytoplasm. It carries out the reaction 7-aminomethyl-7-carbaguanosine(34) in tRNA + S-adenosyl-L-methionine = epoxyqueuosine(34) in tRNA + adenine + L-methionine + 2 H(+). Its pathway is tRNA modification; tRNA-queuosine biosynthesis. In terms of biological role, transfers and isomerizes the ribose moiety from AdoMet to the 7-aminomethyl group of 7-deazaguanine (preQ1-tRNA) to give epoxyqueuosine (oQ-tRNA). This Rickettsia bellii (strain RML369-C) protein is S-adenosylmethionine:tRNA ribosyltransferase-isomerase.